Reading from the N-terminus, the 471-residue chain is Siroheme synthase (471 aa).

Positions 1–203 (MEYLPLFADL…GRLEQAEQAL (203 aa)) are precorrin-2 dehydrogenase /sirohydrochlorin ferrochelatase. NAD(+) is bound by residues 22 to 23 (EV) and 43 to 44 (RA). Position 128 is a phosphoserine (serine 128). A uroporphyrinogen-III C-methyltransferase region spans residues 215-471 (GEVALVGAGP…QKRASVVNLA (257 aa)). Residue proline 224 coordinates S-adenosyl-L-methionine. Residue aspartate 247 is the Proton acceptor of the active site. Lysine 269 (proton donor) is an active-site residue. S-adenosyl-L-methionine is bound by residues 300-302 (GGD), isoleucine 305, 330-331 (TA), methionine 382, and glycine 411.

In the N-terminal section; belongs to the precorrin-2 dehydrogenase / sirohydrochlorin ferrochelatase family. It in the C-terminal section; belongs to the precorrin methyltransferase family.

It carries out the reaction uroporphyrinogen III + 2 S-adenosyl-L-methionine = precorrin-2 + 2 S-adenosyl-L-homocysteine + H(+). The enzyme catalyses precorrin-2 + NAD(+) = sirohydrochlorin + NADH + 2 H(+). The catalysed reaction is siroheme + 2 H(+) = sirohydrochlorin + Fe(2+). Its pathway is cofactor biosynthesis; adenosylcobalamin biosynthesis; precorrin-2 from uroporphyrinogen III: step 1/1. It functions in the pathway cofactor biosynthesis; adenosylcobalamin biosynthesis; sirohydrochlorin from precorrin-2: step 1/1. The protein operates within porphyrin-containing compound metabolism; siroheme biosynthesis; precorrin-2 from uroporphyrinogen III: step 1/1. It participates in porphyrin-containing compound metabolism; siroheme biosynthesis; siroheme from sirohydrochlorin: step 1/1. Its pathway is porphyrin-containing compound metabolism; siroheme biosynthesis; sirohydrochlorin from precorrin-2: step 1/1. Multifunctional enzyme that catalyzes the SAM-dependent methylations of uroporphyrinogen III at position C-2 and C-7 to form precorrin-2 via precorrin-1. Then it catalyzes the NAD-dependent ring dehydrogenation of precorrin-2 to yield sirohydrochlorin. Finally, it catalyzes the ferrochelation of sirohydrochlorin to yield siroheme. This chain is Siroheme synthase, found in Sodalis glossinidius (strain morsitans).